Reading from the N-terminus, the 135-residue chain is Large ribosomal subunit protein uL22 (135 aa).

The tract at residues 112 to 135 is disordered; it reads KKPEKKKLKAKSAKTEEAPKAAEV. Residues 124–135 show a composition bias toward basic and acidic residues; sequence AKTEEAPKAAEV.

It belongs to the universal ribosomal protein uL22 family. In terms of assembly, part of the 50S ribosomal subunit.

In terms of biological role, this protein binds specifically to 23S rRNA; its binding is stimulated by other ribosomal proteins, e.g. L4, L17, and L20. It is important during the early stages of 50S assembly. It makes multiple contacts with different domains of the 23S rRNA in the assembled 50S subunit and ribosome. Its function is as follows. The globular domain of the protein is located near the polypeptide exit tunnel on the outside of the subunit, while an extended beta-hairpin is found that lines the wall of the exit tunnel in the center of the 70S ribosome. This is Large ribosomal subunit protein uL22 from Brachyspira hyodysenteriae (strain ATCC 49526 / WA1).